We begin with the raw amino-acid sequence, 379 residues long: Probable RNA 3'-terminal phosphate cyclase-like protein (379 aa).

This sequence belongs to the RNA 3'-terminal cyclase family. Type 2 subfamily. As to quaternary structure, part of the small subunit (SSU) processome, composed of more than 70 proteins and the RNA chaperone small nucleolar RNA (snoRNA) U3.

It is found in the nucleus. It localises to the nucleolus. In terms of biological role, part of the small subunit (SSU) processome, first precursor of the small eukaryotic ribosomal subunit. During the assembly of the SSU processome in the nucleolus, many ribosome biogenesis factors, an RNA chaperone and ribosomal proteins associate with the nascent pre-rRNA and work in concert to generate RNA folding, modifications, rearrangements and cleavage as well as targeted degradation of pre-ribosomal RNA by the RNA exosome. Does not have cyclase activity. This is Probable RNA 3'-terminal phosphate cyclase-like protein from Caenorhabditis elegans.